A 201-amino-acid polypeptide reads, in one-letter code: MPQAVAGPEIERLIQLLGRMPGLGPRSARRAALQLIKKRETLLAPLADAMRVAAERIVVCRSCGNVDTSDPCTICRDETRDPTTLVVVEDVSDLWALERSGAVKARYHVLGGVLSALDGVRPEHLTIARLVERAGEPGVKEIILALNATVDGQTTAHYVTESIKPFGLTVTRLAHGVPVGGELDYLDEGTLTAAIRSRTAF.

The C4-type zinc finger occupies 60–75 (CRSCGNVDTSDPCTIC). One can recognise a Toprim domain in the interval 83–178 (TTLVVVEDVS…TVTRLAHGVP (96 aa)).

This sequence belongs to the RecR family.

Its function is as follows. May play a role in DNA repair. It seems to be involved in an RecBC-independent recombinational process of DNA repair. It may act with RecF and RecO. This is Recombination protein RecR from Methylorubrum extorquens (strain CM4 / NCIMB 13688) (Methylobacterium extorquens).